A 255-amino-acid polypeptide reads, in one-letter code: UPF0246 protein DP0358 (255 aa).

Belongs to the UPF0246 family.

The polypeptide is UPF0246 protein DP0358 (Desulfotalea psychrophila (strain LSv54 / DSM 12343)).